We begin with the raw amino-acid sequence, 360 residues long: Phospho-N-acetylmuramoyl-pentapeptide-transferase (360 aa).

Transmembrane regions (helical) follow at residues 21–41, 73–93, 94–114, 132–152, 168–188, 199–219, 235–255, 263–283, 288–308, and 338–358; these read YITV…LWIG, TMGG…WANL, ANPY…IGFV, WKYF…YAIG, IMPQ…VGTS, GLAI…AWAT, FSAE…GFLW, VFMG…VAVL, FLLV…ILQV, and VIVR…VTLK.

It belongs to the glycosyltransferase 4 family. MraY subfamily. The cofactor is Mg(2+).

It is found in the cell inner membrane. The catalysed reaction is UDP-N-acetyl-alpha-D-muramoyl-L-alanyl-gamma-D-glutamyl-meso-2,6-diaminopimeloyl-D-alanyl-D-alanine + di-trans,octa-cis-undecaprenyl phosphate = di-trans,octa-cis-undecaprenyl diphospho-N-acetyl-alpha-D-muramoyl-L-alanyl-D-glutamyl-meso-2,6-diaminopimeloyl-D-alanyl-D-alanine + UMP. It functions in the pathway cell wall biogenesis; peptidoglycan biosynthesis. Functionally, catalyzes the initial step of the lipid cycle reactions in the biosynthesis of the cell wall peptidoglycan: transfers peptidoglycan precursor phospho-MurNAc-pentapeptide from UDP-MurNAc-pentapeptide onto the lipid carrier undecaprenyl phosphate, yielding undecaprenyl-pyrophosphoryl-MurNAc-pentapeptide, known as lipid I. This Pasteurella multocida (strain Pm70) protein is Phospho-N-acetylmuramoyl-pentapeptide-transferase.